The primary structure comprises 769 residues: DNA mismatch repair protein MLH1 (769 aa).

Residues 1-335 (MSLRIKALDA…IANQLHAELS (335 aa)) are DNA- and ATP-binding. Residues 422-441 (EGSSTKRQLSEPKVTNVSHS) show a composition bias toward polar residues. The interval 422–480 (EGSSTKRQLSEPKVTNVSHSQEAEKLTLNESEQPRDANTINDNDLKDQPKKKQKLGDYK) is disordered. Serine 441 carries the post-translational modification Phosphoserine; by ATM or ATR. 2 stretches are compositionally biased toward basic and acidic residues: residues 442 to 456 (QEAEKLTLNESEQPR) and 464 to 478 (NDLKDQPKKKQKLGD). The interval 501–756 (RVPKERVNVN…RHILKDVVEI (256 aa)) is interaction with PMS1.

The protein belongs to the DNA mismatch repair MutL/HexB family. As to quaternary structure, heterodimer of MLH1 and PMS1, called MutLalpha, which is the major MMR MutL activity correcting base-base mismatches as well as IDLs. The heterodimer binds double strand DNA independently of a mismatch with positive cooperativity and has more than one DNA binding site. Forms a ternary complex with either the MSH2-MSH6 (MutSalpha) or the MSH2-MSH3 heterodimer (MutSbeta), which recognize and bind to mismatch DNA. Ternary complex formation is promoted by ATP binding. Heterodimer of MLH1 and MLH3, called MutLbeta, which is involved in correction of a specific subset of IDLs when associated with MutSbeta. Heterodimer of MLH1 and MLH2.

It is found in the nucleus. Its function is as follows. Required for DNA mismatch repair (MMR), correcting base-base mismatches and insertion-deletion loops (IDLs) resulting from DNA replication, DNA damage or from recombination events between non-identical sequences during meiosis. Component of different MutL heterodimers that form a ternary complex with the MutS heterodimers, which initially recognize the DNA mismatches. This complex is thought to be responsible for directing the downstream MMR events, including strand discrimination, excision, and resynthesis. Plays a major role in maintaining the genetic stability of simple sequence repeats, the repair of heteroduplex sites present in meiotic recombination intermediates, and the promotion of meiotic crossing-over. The protein is DNA mismatch repair protein MLH1 (MLH1) of Saccharomyces cerevisiae (strain ATCC 204508 / S288c) (Baker's yeast).